A 229-amino-acid chain; its full sequence is Prolactin (229 aa).

The signal sequence occupies residues 1–30; the sequence is MDSKGSAQKGSRLLLLLVVSNLLLCQGVVS. C34 and C41 are disulfide-bonded. At S56 the chain carries Phosphoserine. N-linked (GlcNAc...) asparagine; partial glycosylation is present at N61. Phosphoserine is present on residues S64 and S120. Disulfide bonds link C88–C204 and C221–C229.

This sequence belongs to the somatotropin/prolactin family. As to quaternary structure, interacts with PRLR.

It is found in the secreted. Prolactin acts primarily on the mammary gland by promoting lactation, mammogenesis, mitogenesis and osmoregulation. This Ovis aries (Sheep) protein is Prolactin (PRL).